The sequence spans 298 residues: uncharacterized protein (298 aa).

The next 10 membrane-spanning stretches (helical) occupy residues 5–23, 33–52, 72–91, 101–120, 127–145, 149–166, 175–194, 207–229, 238–260, and 265–284; these read ILVS…YFST, IFGY…VTLF, ALSY…LFLW, VSFG…RVFF, FKFI…NIVL, LSWE…YFSI, LASF…YFAL, FIWG…YVIA, LGLL…GEQI, and YPLF…DGVY. One can recognise an EamA domain in the interval 13–144; the sequence is FLFGYMYYFS…ATLGVISNIV (132 aa).

The protein belongs to the EamA transporter family.

It localises to the cell membrane. This is an uncharacterized protein from Haemophilus influenzae (strain ATCC 51907 / DSM 11121 / KW20 / Rd).